Reading from the N-terminus, the 235-residue chain is Mediator of RNA polymerase II transcription subunit 7 (235 aa).

This sequence belongs to the Mediator complex subunit 7 family. In terms of assembly, component of the Mediator complex.

It localises to the nucleus. Component of the Mediator complex, a coactivator involved in the regulated transcription of nearly all RNA polymerase II-dependent genes. Mediator functions as a bridge to convey information from gene-specific regulatory proteins to the basal RNA polymerase II transcription machinery. Mediator is recruited to promoters by direct interactions with regulatory proteins and serves as a scaffold for the assembly of a functional preinitiation complex with RNA polymerase II and the general transcription factors. This Yarrowia lipolytica (strain CLIB 122 / E 150) (Yeast) protein is Mediator of RNA polymerase II transcription subunit 7 (MED7).